A 940-amino-acid chain; its full sequence is Isoleucine--tRNA ligase (940 aa).

Positions 58–68 (PYANGSIHIGH) match the 'HIGH' region motif. Glu564 is an L-isoleucyl-5'-AMP binding site. The 'KMSKS' region motif lies at 605-609 (KMSKS). Position 608 (Lys608) interacts with ATP. Zn(2+) contacts are provided by Cys903, Cys906, Cys923, and Cys926.

This sequence belongs to the class-I aminoacyl-tRNA synthetase family. IleS type 1 subfamily. As to quaternary structure, monomer. Zn(2+) serves as cofactor.

Its subcellular location is the cytoplasm. It catalyses the reaction tRNA(Ile) + L-isoleucine + ATP = L-isoleucyl-tRNA(Ile) + AMP + diphosphate. Its function is as follows. Catalyzes the attachment of isoleucine to tRNA(Ile). As IleRS can inadvertently accommodate and process structurally similar amino acids such as valine, to avoid such errors it has two additional distinct tRNA(Ile)-dependent editing activities. One activity is designated as 'pretransfer' editing and involves the hydrolysis of activated Val-AMP. The other activity is designated 'posttransfer' editing and involves deacylation of mischarged Val-tRNA(Ile). The chain is Isoleucine--tRNA ligase from Shewanella sp. (strain W3-18-1).